Here is a 434-residue protein sequence, read N- to C-terminus: Tyrosine-protein phosphatase non-receptor type 1 (434 aa).

In terms of domain architecture, Tyrosine-protein phosphatase spans 3–277; the sequence is IEKEFHRLDQ…RFSYLAVIEG (275 aa). Serine 50 is modified (phosphoserine). Residues aspartate 181, 215–221, and glutamine 262 each bind substrate; that span reads CSAGIGR. Cysteine 215 functions as the Phosphocysteine intermediate in the catalytic mechanism. Residues 291 to 319 are disordered; that stretch reads WKELSNEDLDPPPEHTPPPPRPPKRTSEM.

This sequence belongs to the protein-tyrosine phosphatase family. Non-receptor class 1 subfamily. Interacts with EPHA3 (phosphorylated); dephosphorylates EPHA3 and may regulate its trafficking and function. Interacts with MET. Interacts with NCK1. In terms of processing, phosphorylated on serine and threonine residues near the N-terminus by casein kinase II (CK2).

It is found in the endoplasmic reticulum membrane. The catalysed reaction is O-phospho-L-tyrosyl-[protein] + H2O = L-tyrosyl-[protein] + phosphate. May play an important role in CKII- and p60c-src-induced signal transduction cascades. May regulate the EFNA5-EPHA3 signaling pathway which modulates cell reorganization and cell-cell repulsion. May also regulate the hepatocyte growth factor receptor signaling pathway through dephosphorylation of MET. This Gallus gallus (Chicken) protein is Tyrosine-protein phosphatase non-receptor type 1 (PTPN1).